A 77-amino-acid chain; its full sequence is MNLSFCVQALLLLWLSLTAVCGVPLMLPPDGKGLEEGNMRYLVKPRTSRTGPGAWQGGRRKFRRQRPRLSHKGPMPF.

Positions 1 to 22 are cleaved as a signal peptide; that stretch reads MNLSFCVQALLLLWLSLTAVCG. Residues 23-41 constitute a propeptide that is removed on maturation; the sequence is VPLMLPPDGKGLEEGNMRY. The disordered stretch occupies residues 45-77; the sequence is PRTSRTGPGAWQGGRRKFRRQRPRLSHKGPMPF. The span at 58–71 shows a compositional bias: basic residues; sequence GRRKFRRQRPRLSH.

Belongs to the apelin family. Post-translationally, several active peptides may be produced by proteolytic processing of the peptide precursor. In terms of tissue distribution, expressed in the lung, testis, ovary, uterus and mammary gland. Expressed in neurons in the thalamic paraventricular and hypothalamic supraoptic nuclei. The lung, testis and uterus mainly contain a large form that looks like apelin-36, whereas the mammary gland seems to contain 2 forms of apelin, a large form close to apelin-36 and a small form close to apelin-13 (at protein level). Widely expressed in the adult, with highest levels in the mammary gland of lactating animals, very high levels in the lung, intermediate levels in the spinal cord, ovary, adipose tissue, brain (neuronal cell bodies and fibers in the supraoptic and the paraventricular nuclei), heart and testis, and lowest levels in the pituitary gland, kidney, stomach, uterus and pancreas.

Its subcellular location is the secreted. It localises to the extracellular space. Functionally, peptide hormone that functions as endogenous ligand for the G-protein-coupled apelin receptor (APLNR/APJ), that plays a role in cadiovascular homeostasis. Functions as a balanced agonist activating both G(i) protein pathway and beta-arrestin pathway of APLNR. Downstream G proteins activation, apelin can inhibit cAMP production and activate key intracellular effectors such as ERKs. On the other hand, APLNR activation induces beta-arrestin recruitment to the membrane leading to desensitization and internalization of the receptor. Apelin blunts cardiac hypertrophic induction from APLNR on response to pathological stimuli, but also induces myocardial hypertrophy under normal conditions. Apelin-36 dissociates more hardly than (pyroglu)apelin-13 from APLNR. Involved in the regulation of cardiac precursor cell movements during gastrulation and heart morphogenesis. Has an inhibitory effect on cytokine production in response to T-cell receptor/CD3 cross-linking; the oral intake of apelin in the colostrum and the milk might therefore modulate immune responses in neonates. Plays a role in early coronary blood vessels formation. Mediates myocardial contractility in an ERK1/2-dependent manner. May also have a role in the central control of body fluid homeostasis by influencing vasopressin release and drinking behavior. This is Apelin from Rattus norvegicus (Rat).